The sequence spans 440 residues: Chitinase-like protein Idgf5 (440 aa).

A signal peptide spans 1–27; the sequence is MRNKMIYFNFHLFVIIFANLQIFQVQA. In terms of domain architecture, GH18 spans 28-439; the sequence is ANIFCYYDTQ…KSIHNAFKKF (412 aa). C32 and C56 form a disulfide bridge. N-linked (GlcNAc...) asparagine glycosylation is found at N126, N283, and N403. A disulfide bridge links C340 with C421.

The protein belongs to the glycosyl hydrolase 18 family. IDGF subfamily. In terms of processing, glycosylated.

The protein resides in the secreted. Functionally, cooperates with insulin-like peptides to stimulate the proliferation, polarization and motility of imaginal disk cells. May act by stabilizing the binding of insulin-like peptides to its receptor through a simultaneous interaction with both molecules to form a multiprotein signaling complex. The polypeptide is Chitinase-like protein Idgf5 (Idgf5) (Glossina morsitans morsitans (Savannah tsetse fly)).